A 289-amino-acid chain; its full sequence is Golgi to ER traffic protein 2 (289 aa).

Basic and acidic residues predominate over residues 1-10 (MSEVSEAEKR). Residues 1 to 68 (MSEVSEAEKR…LQRGSNSGQS (68 aa)) are disordered. Residues 1 to 153 (MSEVSEAEKR…VGVHQFQVRQ (153 aa)) are Cytoplasmic-facing. Residues 11–21 (RILREKRKQKF) show a composition bias toward basic residues. Over residues 33 to 68 (ITTQQPGGASGDSTVTSAEISDNEGSLQRGSNSGQS) the composition is skewed to polar residues. A helical membrane pass occupies residues 154-173 (LKAYMLLLRWAILLPFIYYV). At 174-196 (MHPGTAHWLHTSRFLHFVMEPRN) the chain is on the lumenal side. The chain crosses the membrane as a helical span at residues 197-216 (FFMVFTTFEVASISIYYQVL). At 217–263 (LTLERTNKVNSLSYSSKLVTWAGLVPDGMLPIDNLQGKVVVALHYWD) the chain is on the cytoplasmic side. A helical membrane pass occupies residues 264–284 (ILSMYLTDLSLCLVAAGLMKY). Residues 285 to 289 (YHAAP) lie on the Lumenal side of the membrane.

It belongs to the GET2 family. Component of the Golgi to ER traffic (GET) complex, which is composed of GET1, GET2 and GET3. Within the complex, GET1 and GET2 form a heterotetramer which is stabilized by phosphatidylinositol binding and which binds to the GET3 homodimer.

Its subcellular location is the endoplasmic reticulum membrane. The protein resides in the golgi apparatus membrane. Its function is as follows. Required for the post-translational delivery of tail-anchored (TA) proteins to the endoplasmic reticulum. Together with GET1, acts as a membrane receptor for soluble GET3, which recognizes and selectively binds the transmembrane domain of TA proteins in the cytosol. The GET complex cooperates with the HDEL receptor ERD2 to mediate the ATP-dependent retrieval of resident ER proteins that contain a C-terminal H-D-E-L retention signal from the Golgi to the ER. This is Golgi to ER traffic protein 2 from Eremothecium gossypii (strain ATCC 10895 / CBS 109.51 / FGSC 9923 / NRRL Y-1056) (Yeast).